Here is a 430-residue protein sequence, read N- to C-terminus: PCI domain-containing protein 2 homolog (430 aa).

In terms of domain architecture, PCI spans 243–424; that stretch reads ITYRFFNGRL…ALVVSPTNPF (182 aa).

The protein belongs to the CSN12 family.

The protein is PCI domain-containing protein 2 homolog (pcid2) of Dictyostelium discoideum (Social amoeba).